The chain runs to 206 residues: KVNYCKIKCLKGGVHTACKYGTSTKPNCGKMVVKAYGLTEAEKQEILKVHNDFRQKVAKGLETRGNPGPQPPAKNMNNLVWNDELANIAQVWASQCNYGHDTCKDTEKYPVGQNIAKRSTTAALFDSPGKLVKMWENEVKDFNPNIEWSKNNLKKTGHYTQMVWAKTKEIGCGSVKYVKDEWYTHYLVCNYGPSGNFRNEKLYEKK.

4 cysteine pairs are disulfide-bonded: Cys-5–Cys-18, Cys-9–Cys-103, Cys-28–Cys-96, and Cys-172–Cys-189. Residues 47–191 (LKVHNDFRQK…WYTHYLVCNY (145 aa)) enclose the SCP domain.

Belongs to the CRISP family. Venom allergen 5-like subfamily. As to expression, expressed by the venom gland.

It localises to the secreted. The protein is Venom allergen 5 of Vespula vidua (Ground hornet).